The following is a 442-amino-acid chain: UDP-glycosyltransferase 79B8 (442 aa).

UDP-alpha-D-glucose is bound by residues Ser-260, 319–321 (VQQ), 336–344 (HCGPGTIWE), and 358–361 (LGDQ).

It belongs to the UDP-glycosyltransferase family.

This is UDP-glycosyltransferase 79B8 (UGT79B8) from Arabidopsis thaliana (Mouse-ear cress).